The chain runs to 369 residues: DNA polymerase IV 2 (369 aa).

Residues 17-201 form the UmuC domain; the sequence is VFHVDMDSFF…LPVSRIPGVG (185 aa). Mg(2+)-binding residues include Asp21 and Asp119. Residue Glu120 is part of the active site.

Belongs to the DNA polymerase type-Y family. In terms of assembly, monomer. Mg(2+) serves as cofactor.

It is found in the cytoplasm. The catalysed reaction is DNA(n) + a 2'-deoxyribonucleoside 5'-triphosphate = DNA(n+1) + diphosphate. In terms of biological role, poorly processive, error-prone DNA polymerase involved in untargeted mutagenesis. Copies undamaged DNA at stalled replication forks, which arise in vivo from mismatched or misaligned primer ends. These misaligned primers can be extended by PolIV. Exhibits no 3'-5' exonuclease (proofreading) activity. May be involved in translesional synthesis. The polypeptide is DNA polymerase IV 2 (dbh2) (Methanosarcina mazei (strain ATCC BAA-159 / DSM 3647 / Goe1 / Go1 / JCM 11833 / OCM 88) (Methanosarcina frisia)).